Consider the following 257-residue polypeptide: tRNA uridine(34) hydroxylase (257 aa).

One can recognise a Rhodanese domain in the interval 128-222 (NGRRLVMLDA…YFEQVGGEGY (95 aa)). Catalysis depends on C182, which acts as the Cysteine persulfide intermediate.

The protein belongs to the TrhO family.

The catalysed reaction is uridine(34) in tRNA + AH2 + O2 = 5-hydroxyuridine(34) in tRNA + A + H2O. In terms of biological role, catalyzes oxygen-dependent 5-hydroxyuridine (ho5U) modification at position 34 in tRNAs. This chain is tRNA uridine(34) hydroxylase, found in Xylella fastidiosa (strain 9a5c).